A 270-amino-acid polypeptide reads, in one-letter code: MSDRSPATENPWQQLRRLTPARIALGRAGASLPTAAHLAFQFAHAQARDAVHLPFEPAALQDGLRRRGLDGLLLRSAARDRDTYLQRPDLGRRLRPECATRLRDWHAEHGGGRDLAIVVADGLSALAVQRHALPLLDCLLERLPAEGWSLAPISLVEQGRVAVADEIGELLGARMTVILIGERPGLSSPDSLGLYFTFAPRVGLTDAARNCISNVRPEGLSYAMAAHKLLYLMREACRRRLSGVELKDEAEVARLDGAGSGPGNFLLGEG.

Positions 161, 182, and 211 each coordinate adenosylcob(III)alamin.

Belongs to the EutC family. As to quaternary structure, the basic unit is a heterodimer which dimerizes to form tetramers. The heterotetramers trimerize; 6 large subunits form a core ring with 6 small subunits projecting outwards. Adenosylcob(III)alamin serves as cofactor.

The protein localises to the bacterial microcompartment. It carries out the reaction ethanolamine = acetaldehyde + NH4(+). It functions in the pathway amine and polyamine degradation; ethanolamine degradation. Its function is as follows. Catalyzes the deamination of various vicinal amino-alcohols to oxo compounds. Allows this organism to utilize ethanolamine as the sole source of nitrogen and carbon in the presence of external vitamin B12. The chain is Ethanolamine ammonia-lyase small subunit from Azotobacter vinelandii (strain DJ / ATCC BAA-1303).